Reading from the N-terminus, the 177-residue chain is Peptide methionine sulfoxide reductase MsrA (177 aa).

Cys-15 is an active-site residue.

Belongs to the MsrA Met sulfoxide reductase family.

The catalysed reaction is L-methionyl-[protein] + [thioredoxin]-disulfide + H2O = L-methionyl-(S)-S-oxide-[protein] + [thioredoxin]-dithiol. The enzyme catalyses [thioredoxin]-disulfide + L-methionine + H2O = L-methionine (S)-S-oxide + [thioredoxin]-dithiol. Its function is as follows. Has an important function as a repair enzyme for proteins that have been inactivated by oxidation. Catalyzes the reversible oxidation-reduction of methionine sulfoxide in proteins to methionine. The polypeptide is Peptide methionine sulfoxide reductase MsrA (Mycobacterium leprae (strain Br4923)).